The primary structure comprises 207 residues: MYDYIRGTLTYVHTGAIVIECQGIGYHIAITERWAIECIRALHQDFLVFTHVIFRETEHLLYGFHSREERECFRILISFSGIGPKLALAILNALPLKVLCSVVRSEDIRALASVSGIGKKTAEKLMVELKQKLPDLLPLDSRVETSQTHTTSSCLEEGIQALAALGYSKIAAERMIAEAIKDLPEGSSLTDILPIALKKNFSGVNKD.

Positions 1 to 65 are domain I; that stretch reads MYDYIRGTLT…ETEHLLYGFH (65 aa). The segment at 66-144 is domain II; it reads SREERECFRI…DLLPLDSRVE (79 aa). The tract at residues 145–150 is flexible linker; it reads TSQTHT. Residues 150-207 are domain III; the sequence is TTSSCLEEGIQALAALGYSKIAAERMIAEAIKDLPEGSSLTDILPIALKKNFSGVNKD.

This sequence belongs to the RuvA family. Homotetramer. Forms an RuvA(8)-RuvB(12)-Holliday junction (HJ) complex. HJ DNA is sandwiched between 2 RuvA tetramers; dsDNA enters through RuvA and exits via RuvB. An RuvB hexamer assembles on each DNA strand where it exits the tetramer. Each RuvB hexamer is contacted by two RuvA subunits (via domain III) on 2 adjacent RuvB subunits; this complex drives branch migration. In the full resolvosome a probable DNA-RuvA(4)-RuvB(12)-RuvC(2) complex forms which resolves the HJ.

The protein resides in the cytoplasm. Its function is as follows. The RuvA-RuvB-RuvC complex processes Holliday junction (HJ) DNA during genetic recombination and DNA repair, while the RuvA-RuvB complex plays an important role in the rescue of blocked DNA replication forks via replication fork reversal (RFR). RuvA specifically binds to HJ cruciform DNA, conferring on it an open structure. The RuvB hexamer acts as an ATP-dependent pump, pulling dsDNA into and through the RuvAB complex. HJ branch migration allows RuvC to scan DNA until it finds its consensus sequence, where it cleaves and resolves the cruciform DNA. The polypeptide is Holliday junction branch migration complex subunit RuvA (Chlamydia pneumoniae (Chlamydophila pneumoniae)).